The chain runs to 304 residues: Secreted mono- and diacylglycerol lipase MDL2 (304 aa).

A signal peptide spans 1–19; that stretch reads MILGRTISLFLGCSALVSG. Cysteines 55 and 297 form a disulfide. Residues Asn102 and Asn161 are each glycosylated (N-linked (GlcNAc...) asparagine). Ser171 (nucleophile) is an active-site residue. Asp228 is a catalytic residue. Asn253 carries an N-linked (GlcNAc...) asparagine glycan. His281 is an active-site residue.

Belongs to the AB hydrolase superfamily. Lipase family. Class 3 subfamily.

Its subcellular location is the secreted. The protein resides in the cell wall. The catalysed reaction is a monoacylglycerol + H2O = glycerol + a fatty acid + H(+). It carries out the reaction a diacylglycerol + H2O = a monoacylglycerol + a fatty acid + H(+). Functionally, secreted lipase involved in Dandruff and seborrheic dermatitis (D/SD) probably via lipase-mediated breakdown of sebaceous lipids and release of irritating free fatty acids. Shows activity against monoglyceride and diglyceride substrates, but not triglyceride substrates and does not exhibit regio-selective production of diacylglycerols. Hydrolyzes both 1,2- and 1,3-diacylglycerols. Also hydrolyzes distearin, dilinolein and dipalmitolein. Cleaves oleic acid from 1,2 isomers of diolein on both the 1 and the 2 position of the glycerol backbone, resulting mainly in free fatty acids but no monoolein is detected. Shows activity on monoolein and liberates mostly free fatty acids, but can also perform the reverse reaction and produce diolein. The sequence is that of Secreted mono- and diacylglycerol lipase MDL2 from Malassezia globosa (strain ATCC MYA-4612 / CBS 7966) (Dandruff-associated fungus).